Reading from the N-terminus, the 296-residue chain is Cytidine deaminase (296 aa).

2 consecutive CMP/dCMP-type deaminase domains span residues Thr-47–Lys-167 and Asp-186–Val-296. Position 88–90 (Asn-88–Glu-90) interacts with substrate. His-101 contacts Zn(2+). Glu-103 functions as the Proton donor in the catalytic mechanism. Residues Cys-128 and Cys-131 each contribute to the Zn(2+) site.

It belongs to the cytidine and deoxycytidylate deaminase family. Homodimer. Zn(2+) is required as a cofactor.

It catalyses the reaction cytidine + H2O + H(+) = uridine + NH4(+). The enzyme catalyses 2'-deoxycytidine + H2O + H(+) = 2'-deoxyuridine + NH4(+). Its function is as follows. This enzyme scavenges exogenous and endogenous cytidine and 2'-deoxycytidine for UMP synthesis. The polypeptide is Cytidine deaminase (Shewanella sp. (strain W3-18-1)).